Reading from the N-terminus, the 435-residue chain is Zinc finger CCCH domain-containing protein 17 (435 aa).

Disordered stretches follow at residues 1–30 (MDIETDGRFGNKRVHHRLGPANGAASSSTS) and 58–107 (TAKR…GPRH). The segment at 28-54 (STSGKVCIHWRAGRCNRFPCPYLHSEL) adopts a C3H1-type 1 zinc-finger fold. Gly residues predominate over residues 77-103 (SGGGGGRGAGGAGGPNKWGRGPGGADG). The C3H1-type 2 zinc finger occupies 108–135 (KVPDRPCRYFLAGDCSYGEKCRYPHSYS). 7 WD repeats span residues 148 to 189 (GHEK…GVIN), 191 to 225 (GREIGCMISEGPWLFVGIPDAVKVWNMQTQAEMNL), 227 to 264 (GPTGQVYALAVGNELLFAATQDGRILAWRFSAATNGFE), 271 to 308 (GHQLAVVSLVVGAMRLYSASMDKTIRVWDLATLQCIQT), 311 to 348 (DHTGVVMSVLCWDQFLLSCSLDQTIKVWAATESGSLEV), 355 to 395 (EHGA…DRGR), and 397 to 435 (FSKQEIRAIQVGPSGLFFTGDGTGELKVWQWVIDGSQTK).

This is Zinc finger CCCH domain-containing protein 17 from Oryza sativa subsp. japonica (Rice).